The primary structure comprises 233 residues: Purine nucleoside phosphorylase DeoD-type (233 aa).

Histidine 4 provides a ligand contact to a purine D-ribonucleoside. Residues glycine 20, arginine 24, arginine 43, and 87–90 each bind phosphate; that span reads RIGT. A purine D-ribonucleoside-binding positions include 179-181 and 203-204; these read EME and SD. Aspartate 204 serves as the catalytic Proton donor.

This sequence belongs to the PNP/UDP phosphorylase family. In terms of assembly, homohexamer; trimer of homodimers.

It carries out the reaction a purine D-ribonucleoside + phosphate = a purine nucleobase + alpha-D-ribose 1-phosphate. The enzyme catalyses a purine 2'-deoxy-D-ribonucleoside + phosphate = a purine nucleobase + 2-deoxy-alpha-D-ribose 1-phosphate. Its function is as follows. Catalyzes the reversible phosphorolytic breakdown of the N-glycosidic bond in the beta-(deoxy)ribonucleoside molecules, with the formation of the corresponding free purine bases and pentose-1-phosphate. In Helicobacter pylori (strain J99 / ATCC 700824) (Campylobacter pylori J99), this protein is Purine nucleoside phosphorylase DeoD-type.